The sequence spans 483 residues: Cobyric acid synthase (483 aa).

Residues 252–439 (KLNVVVPVLT…LHGFFDEAEA (188 aa)) form the GATase cobBQ-type domain. The active-site Nucleophile is the Cys-333. His-431 is a catalytic residue.

This sequence belongs to the CobB/CobQ family. CobQ subfamily.

It participates in cofactor biosynthesis; adenosylcobalamin biosynthesis. Catalyzes amidations at positions B, D, E, and G on adenosylcobyrinic A,C-diamide. NH(2) groups are provided by glutamine, and one molecule of ATP is hydrogenolyzed for each amidation. The protein is Cobyric acid synthase of Vibrio parahaemolyticus serotype O3:K6 (strain RIMD 2210633).